Here is a 121-residue protein sequence, read N- to C-terminus: Fluoride-specific ion channel FluC 1 (121 aa).

4 helical membrane-spanning segments follow: residues Tyr-3–Leu-23, Val-35–Phe-55, Ala-64–Ile-84, and Phe-92–Val-112. Positions 71 and 74 each coordinate Na(+).

This sequence belongs to the fluoride channel Fluc/FEX (TC 1.A.43) family.

The protein resides in the cell membrane. It carries out the reaction fluoride(in) = fluoride(out). Na(+) is not transported, but it plays an essential structural role and its presence is essential for fluoride channel function. Functionally, fluoride-specific ion channel. Important for reducing fluoride concentration in the cell, thus reducing its toxicity. In Staphylococcus aureus (strain bovine RF122 / ET3-1), this protein is Fluoride-specific ion channel FluC 1.